The following is a 979-amino-acid chain: MRLGNRPEDIRTCVHLRWHIHGLLRQENASVVISKCLRHGAWRLLLWLLLLATWDVGSGQLHYSVPEEAKHGTFVGRIAQDLGLELAELVPRLFRVVSKDRGDLLEVNLQNGILFVNSRIDREELCGQNAECSIHLEVIVDRPLQVFHVEVEVRDINDNPPIFSVAEQKILVAESRLLDSRFPLEGASDADVGENSMLTYKLSSNEFFILDIVNKRGKGKFPVLVLRKLIDREENPQLKLLLTATDGGKPEFTGSVSLLIQVLDVNDNAPVFDRSVYEVKMYENQENKTLVIWLNATDSDEGINKEVEYSFSSLASSIIRQKFLINEKTGEIKINGAIDFEESNNYEIHVDATDKGYPPMVAHCTVLVEILDENDNAPEIVLTSLSLPVKEDAPLGSVIALISVSDKDSGVNGQVTCSLTNHVPFKLVSTFKNYYSLVLDSALDRETTADYKVVVTARDGGSPSLWATASVSVEVADVNDNAPAFAHPEYTVFVKENNPPGVHIFTVLAVDADAQENALVSYSLVERRVGERLLSSYVSVHAESGKVFALQPLDHEELELLQFQVSARDAGVPALGSNVTLQVFVQDENDNPPTLLGHQSGGPAGEFSQLVSRSVGAGHVVSKVRAVDADSGYNAWLSYELHPTVGARSPFRVGLYTGEISMTRALDESDLPRQRLLVLVKDHGEPMLIATATVLVSLVENGQVPKASSQGLPNSSRREASLMDVNVYLIIAICAVSSLLVLTLLLYTALRCSAVPMQAGCGLGKPTLVCSSAVGTWSYSQQRQQRVCSGEGPPKTDLMAFSPSLTPCPVAEVGMESHSVGGDVPGKPRQPNPDWRYSASLRAGMHSSVHLEEAGILRAGPGGPDQQWPTVSSATPEPEAGEVSPPVGAGVNSNSWTFKYGPGNPKQSGPGELPDKFIIPGSPAIISIRQEPANNQIDKSDFITFGKKEETKKKKKKKKGNKTQEKKEKGNSTTDNSDQ.

The signal sequence occupies residues 1-59 (MRLGNRPEDIRTCVHLRWHIHGLLRQENASVVISKCLRHGAWRLLLWLLLLATWDVGSG). The Extracellular segment spans residues 60-726 (QLHYSVPEEA…RREASLMDVN (667 aa)). 6 Cadherin domains span residues 64-163 (SVPE…PPIF), 164-272 (SVAE…APVF), 273-380 (DRSV…APEI), 381-485 (VLTS…APAF), 486-595 (AHPE…PPTL), and 611-707 (VSRS…VPKA). N-linked (GlcNAc...) asparagine glycosylation is found at Asn287 and Asn295. Asn578 carries N-linked (GlcNAc...) asparagine glycosylation. A helical transmembrane segment spans residues 727–747 (VYLIIAICAVSSLLVLTLLLY). Residues 748–979 (TALRCSAVPM…GNSTTDNSDQ (232 aa)) lie on the Cytoplasmic side of the membrane. PXXP repeat units lie at residues 763–766 (LGKP), 828–831 (PRQP), 861–864 (PGGP), 902–905 (PGNP), and 920–923 (PGSP). Positions 763 to 923 (LGKPTLVCSS…PDKFIIPGSP (161 aa)) are 5 X 4 AA repeats of P-X-X-P. The segment at 859 to 979 (AGPGGPDQQW…GNSTTDNSDQ (121 aa)) is disordered. Positions 938 to 952 (DKSDFITFGKKEETK) are enriched in basic and acidic residues.

It localises to the cell membrane. Functionally, potential calcium-dependent cell-adhesion protein. May be involved in the establishment and maintenance of specific neuronal connections in the brain. The chain is Protocadherin alpha-9 from Mus musculus (Mouse).